Here is a 438-residue protein sequence, read N- to C-terminus: Transcriptional enhancer factor TEF-3 (438 aa).

Residues 1 to 18 (MTSEWSSPASPEGSNDSG) show a composition bias toward polar residues. 2 disordered regions span residues 1–36 (MTSE…GVWS) and 195–217 (QPSL…STPA). Positions 28 to 104 (DNDAEGVWSP…QVLARRKARE (77 aa)) form a DNA-binding region, TEA. Over residues 205–216 (SPTGLPPSSSTP) the composition is skewed to low complexity.

As to expression, enriched in cardiac and skeletal muscle.

It is found in the nucleus. Transcription factor which plays a key role in the Hippo signaling pathway, a pathway involved in organ size control and tumor suppression by restricting proliferation and promoting apoptosis. The core of this pathway is composed of a kinase cascade wherein MST1/MST2, in complex with its regulatory protein SAV1, phosphorylates and activates LATS1/2 in complex with its regulatory protein MOB1, which in turn phosphorylates and inactivates YAP1 oncoprotein and WWTR1/TAZ. Binds m-cat elements from muscle-specific promoters and differentially activate transcription. Its function is as follows. Isoform B has probably a transactivation capacity that is lacking in the other isoforms. Isoform D may be defective in DNA binding. The protein is Transcriptional enhancer factor TEF-3 (TEAD4) of Gallus gallus (Chicken).